A 234-amino-acid polypeptide reads, in one-letter code: Zinc transport system ATP-binding protein AdcC (234 aa).

The 231-residue stretch at 4-234 (ITVEDLSFYY…HENGQEVGHA (231 aa)) folds into the ABC transporter domain. 36 to 43 (GENGAAKT) is an ATP binding site.

It belongs to the ABC transporter superfamily.

Functionally, part of the ATP-driven transport system AdcABC for zinc. Required for transformability. This Streptococcus pneumoniae (strain ATCC BAA-255 / R6) protein is Zinc transport system ATP-binding protein AdcC (adcC).